A 312-amino-acid polypeptide reads, in one-letter code: Ribosomal RNA small subunit methyltransferase H (312 aa).

S-adenosyl-L-methionine-binding positions include 35–37 (GGH), D55, F79, D101, and Q108.

This sequence belongs to the methyltransferase superfamily. RsmH family.

It is found in the cytoplasm. The catalysed reaction is cytidine(1402) in 16S rRNA + S-adenosyl-L-methionine = N(4)-methylcytidine(1402) in 16S rRNA + S-adenosyl-L-homocysteine + H(+). Specifically methylates the N4 position of cytidine in position 1402 (C1402) of 16S rRNA. This chain is Ribosomal RNA small subunit methyltransferase H, found in Buchnera aphidicola subsp. Schizaphis graminum (strain Sg).